The chain runs to 371 residues: MRNAGGDKPFSTPVLLREMGLKTHVDDDPKTKAYRLIGYAAVTFSTVSVICFCVTMPVVFTYVQSVKRQMSHEMATCNVNARQIFDDVAALRAGFPFAQAGNRTARQAGYDVHPSKPTPVGYSGGDAAAAEVKGNSPAAAYEDKPFVAVGVEEGPHTATTGSDSEGTCHDCCLPGPPGPPGPPGRPGPNGKAGANGLNGNPGRPPEAPCEPVTPPPCPPCPAGPKGAPGQAGYPGADGQPGSQGDNGEKGSDGAAGEKGRPGPLGKIGEPGATGETGENAENSEPTPGPQGPPGAIGPVGSRGTPGHPGEDGEAGAPGAPGENGTDGENGEDGVPGVPGHDGKAGRAGERGICPKYCAKDGGIFFEDGTRR.

A helical transmembrane segment spans residues 38–60; that stretch reads GYAAVTFSTVSVICFCVTMPVVF. 2 disordered regions span residues 108–127 and 153–371; these read AGYD…GGDA and EGPH…GTRR. The segment covering 174–186 has biased composition (pro residues); the sequence is PGPPGPPGPPGRP. Residues 188–201 are compositionally biased toward low complexity; sequence PNGKAGANGLNGNP. Over residues 202–222 the composition is skewed to pro residues; that stretch reads GRPPEAPCEPVTPPPCPPCPA. The span at 223-240 shows a compositional bias: low complexity; that stretch reads GPKGAPGQAGYPGADGQP. One can recognise a Collagen-like domain in the interval 223 to 280; the sequence is GPKGAPGQAGYPGADGQPGSQGDNGEKGSDGAAGEKGRPGPLGKIGEPGATGETGENA. Residues 246-260 are compositionally biased toward basic and acidic residues; sequence NGEKGSDGAAGEKGR. Residues 314–323 are compositionally biased toward low complexity; it reads AGAPGAPGEN. Residues 340–349 are compositionally biased toward basic and acidic residues; that stretch reads HDGKAGRAGE.

This sequence belongs to the cuticular collagen family. As to quaternary structure, collagen polypeptide chains are complexed within the cuticle by disulfide bonds and other types of covalent cross-links.

The protein resides in the membrane. It localises to the nucleus. Its function is as follows. Probable cuticular collagen-like protein. Nematode cuticles are composed largely of collagen-like proteins. The cuticle functions both as an exoskeleton and as a barrier to protect the worm from its environment. Acts downstream of the Wnt signaling pathway, perhaps in the formation of the adult cuticle. The protein is Cuticle collagen 71 of Caenorhabditis elegans.